We begin with the raw amino-acid sequence, 369 residues long: Biglycan (369 aa).

An N-terminal signal peptide occupies residues 1 to 16 (MCPLWLLAALLALSQA). Positions 17-37 (LPFEQKAFWDFTLDDGLPMLN) are excised as a propeptide. 2 O-linked (Xyl...) (glycosaminoglycan) serine glycosylation sites follow: serine 42 and serine 48. Cystine bridges form between cysteine 64/cysteine 70 and cysteine 68/cysteine 77. 12 LRR repeats span residues 83-103 (KAVP…NNDI), 104-127 (SELR…NNKI), 128-151 (SKIH…KNHL), 152-172 (VEIP…DNRI), 173-196 (RKVP…GNPL), 197-221 (ENSG…EAKL), 222-242 (TGIP…HNKI), 243-266 (QAIE…HNQI), 267-290 (RMIE…NNKL), 291-313 (SRVP…TNNI), 314-343 (TKVG…NNPV), and 344-369 (PYWE…NYKK). N-linked (GlcNAc...) asparagine glycans are attached at residues asparagine 271 and asparagine 312. A disulfide bond links cysteine 322 and cysteine 355.

This sequence belongs to the small leucine-rich proteoglycan (SLRP) family. SLRP class I subfamily. Homodimer. Forms a ternary complex with MFAP2 and ELN. The two attached glycosaminoglycan chains can be either chondroitin sulfate or dermatan sulfate. Found in several connective tissues, especially in articular cartilages.

It is found in the secreted. The protein localises to the extracellular space. Its subcellular location is the extracellular matrix. In terms of biological role, may be involved in collagen fiber assembly. This Ovis aries (Sheep) protein is Biglycan (BGN).